A 171-amino-acid polypeptide reads, in one-letter code: SPbeta prophage-derived uncharacterized protein YokC (171 aa).

This chain is SPbeta prophage-derived uncharacterized protein YokC (yokC), found in Bacillus subtilis (strain 168).